Here is a 394-residue protein sequence, read N- to C-terminus: Probable aspartate/prephenate aminotransferase (394 aa).

The L-aspartate site is built by G40, W126, and N176. Position 239 is an N6-(pyridoxal phosphate)lysine (K239). R370 contacts L-aspartate.

It belongs to the class-I pyridoxal-phosphate-dependent aminotransferase family. As to quaternary structure, homodimer. It depends on pyridoxal 5'-phosphate as a cofactor.

It localises to the cytoplasm. The catalysed reaction is L-aspartate + 2-oxoglutarate = oxaloacetate + L-glutamate. It carries out the reaction L-arogenate + oxaloacetate = prephenate + L-aspartate. Catalyzes the reversible conversion of aspartate and 2-oxoglutarate to glutamate and oxaloacetate. Can also transaminate prephenate in the presence of aspartate. The chain is Probable aspartate/prephenate aminotransferase (aspC) from Aquifex aeolicus (strain VF5).